The chain runs to 118 residues: Probable small nuclear ribonucleoprotein Sm D2 (118 aa).

Residues 29-115 (LSILTNSVKN…VILVVKNPLA (87 aa)) enclose the Sm domain.

The protein belongs to the snRNP core protein family.

The protein localises to the nucleus. Its subcellular location is the cytoplasm. The protein resides in the cytosol. Its function is as follows. Plays a role in pre-mRNA splicing as a core component of the spliceosomal U1, U2, U4 and U5 small nuclear ribonucleoproteins (snRNPs), the building blocks of the spliceosome. The protein is Probable small nuclear ribonucleoprotein Sm D2 (snr-4) of Caenorhabditis elegans.